The sequence spans 601 residues: Ubiquilin-4 (601 aa).

The Ubiquitin-like domain occupies I13–K87. Residues K23 and K62 each participate in a glycyl lysine isopeptide (Lys-Gly) (interchain with G-Cter in SUMO2) cross-link. The disordered stretch occupies residues K87–T155. Positions A88 to S138 are enriched in low complexity. A phosphoserine mark is found at S98 and S144. The span at S139–E149 shows a compositional bias: gly residues. STI1 domains follow at residues N192 to M229 and E230 to M261. T287 carries the post-translational modification Phosphothreonine. The tract at residues F301–F366 is disordered. Over residues S307–S318 the composition is skewed to low complexity. S318 bears the Phosphoserine; by ATM mark. The segment covering L329–S340 has biased composition (pro residues). Residues G344–G354 show a composition bias toward gly residues. Polar residues predominate over residues Q357–F366. 2 STI1 domains span residues N393–L440 and L444–L476. Residues L490–Q533 are disordered. Positions A507–Q533 are enriched in low complexity. The 46-residue stretch at Q553 to S598 folds into the UBA domain.

Homooligomer. Binds signal sequences of proteins that are targeted to the endoplasmic reticulum. Interacts (via UBA domain) with GJA1 (not ubiquitinated) and with ubiquitin; both compete for the same binding site. Interacts (via UBA domain) with ubiquitin and with polyubiquitin chains. Interacts (via ubiquitin-like domain) with PSMD2 and PSMD4, regulatory subunits of the 26S proteasome. Interacts with ATXN1/SCA1; interaction with ATXN1 inhibits polyubiquitination of UBQLN4 and interferes with PSMD4 binding. Interacts with HERPUD1. Interacts (via ubiquitin-like domain) with UBQLN1 (via UBA domain). Interacts with UBQLN2. Interacts (via STI1 1 and 2 domains) with MAP1LC3A/B/C. Interacts with BAG6. Interacts with MRE11 (when ubiquitinated); interaction with ubiquitinated MRE11 leads to MRE11 removal from chromatin. Interacts with DESI1/POST; leading to nuclear export. Interacts with BCL2A1 and BCL2L10. As to quaternary structure, (Microbial infection) Interacts with Mumps virus protein SH. Phosphorylated by ATM at Ser-318 in response to DNA damage, leading to localization in the nucleus and recruitment to sites of DNA damage. In terms of processing, ubiquitinated; this does not lead to proteasomal degradation. May undergo both 'Lys-48'- and 'Lys-63'-linked polyubiquitination. In terms of tissue distribution, highly expressed in pancreas, kidney, skeletal muscle, heart and throughout the brain, and at lower levels in placenta, lung and liver.

The protein localises to the nucleus. The protein resides in the cytoplasm. Its subcellular location is the chromosome. It localises to the endoplasmic reticulum. It is found in the perinuclear region. The protein localises to the cytoplasmic vesicle. The protein resides in the autophagosome. In terms of biological role, regulator of protein degradation that mediates the proteasomal targeting of misfolded, mislocalized or accumulated proteins. Acts by binding polyubiquitin chains of target proteins via its UBA domain and by interacting with subunits of the proteasome via its ubiquitin-like domain. Key regulator of DNA repair that represses homologous recombination repair: in response to DNA damage, recruited to sites of DNA damage following phosphorylation by ATM and acts by binding and removing ubiquitinated MRE11 from damaged chromatin, leading to MRE11 degradation by the proteasome. MRE11 degradation prevents homologous recombination repair, redirecting double-strand break repair toward non-homologous end joining (NHEJ). Specifically recognizes and binds mislocalized transmembrane-containing proteins and targets them to proteasomal degradation. Collaborates with DESI1/POST in the export of ubiquitinated proteins from the nucleus to the cytoplasm. Also plays a role in the regulation of the proteasomal degradation of non-ubiquitinated GJA1. Acts as an adapter protein that recruits UBQLN1 to the autophagy machinery. Mediates the association of UBQLN1 with autophagosomes and the autophagy-related protein LC3 (MAP1LC3A/B/C) and may assist in the maturation of autophagosomes to autolysosomes by mediating autophagosome-lysosome fusion. The protein is Ubiquilin-4 of Homo sapiens (Human).